Consider the following 158-residue polypeptide: Glutathione peroxidase homolog BsaA (158 aa).

Residue cysteine 36 is part of the active site.

The protein belongs to the glutathione peroxidase family.

This is Glutathione peroxidase homolog BsaA (bsaA) from Staphylococcus aureus (strain COL).